The sequence spans 236 residues: Protein YIPF6 (236 aa).

Ala2 bears the N-acetylalanine mark. Residues 2-84 (AEAVESPGDP…HVLYPRKSNT (83 aa)) lie on the Cytoplasmic side of the membrane. Ser7 is modified (phosphoserine). Residues 85 to 105 (LLRDWDLWGPLILCVTLALML) traverse the membrane as a helical segment. Residues 106-115 (QRGSVDSEKD) lie on the Lumenal side of the membrane. A helical transmembrane segment spans residues 116–136 (GGPQFAEVFVIVWFGAVTITL). Topologically, residues 137–146 (NSKLLGGNIS) are cytoplasmic. A helical transmembrane segment spans residues 147–167 (FFQSLCVLGYCILPLTMAMLV). The Lumenal portion of the chain corresponds to 168 to 184 (CRLVLLAEPGPVNFMVR). A helical transmembrane segment spans residues 185 to 205 (LFVVIIMFAWSIVASTAFLAD). The Cytoplasmic portion of the chain corresponds to 206–212 (SQPPNRK). The chain crosses the membrane as a helical span at residues 213–233 (ALAVYPVFLFYFVISWMILTF). At 234–236 (TPQ) the chain is on the lumenal side.

Belongs to the YIP1 family. Predominantly interacts with YIPF1 or YIPF2, but may also form a ternary complex with YIPF1 and YIPF2. This interaction may stabilize YIPF1 and YIPF2.

It is found in the golgi apparatus membrane. May be required for stable YIPF1 and YIPF2 protein expression. This Bos taurus (Bovine) protein is Protein YIPF6 (YIPF6).